The following is a 333-amino-acid chain: Autoinducer 2 import system permease protein LsrD (333 aa).

The next 10 helical transmembrane spans lie at 7–27 (YGWELTLAALLVLEILLFGLS), 45–65 (ICIGIVALPLTMVIVSGGIDI), 67–87 (FGSTIGLCAIFLGIVFQAGVP), 90–110 (VAIPLTVLVGALCGLINAGLI), 118–138 (LVITLGTLYLFGGSALLLSGL), 162–182 (LFGLPIPLVIFMLCVLLFWLL), 212–232 (TLCMLYAMTGVASAISAILLV), 240–260 (SDLGASFLMPAITAVVLGGAN), 261–281 (IYGGSGSILGTALAVLLVGYL), and 288–308 (IGTPNQISSALSGALLILVVV).

Belongs to the binding-protein-dependent transport system permease family. AraH/RbsC subfamily. The complex is composed of two ATP-binding proteins (LsrA), two transmembrane proteins (LsrC and LsrD) and a solute-binding protein (LsrB).

Its subcellular location is the cell inner membrane. Its function is as follows. Part of the ABC transporter complex LsrABCD involved in autoinducer 2 (AI-2) import. Probably responsible for the translocation of the substrate across the membrane. The chain is Autoinducer 2 import system permease protein LsrD (lsrD) from Yersinia pestis bv. Antiqua (strain Antiqua).